A 267-amino-acid polypeptide reads, in one-letter code: Thiazole synthase (267 aa).

The active-site Schiff-base intermediate with DXP is Lys-107. Residues Gly-168, 194-195, and 216-217 contribute to the 1-deoxy-D-xylulose 5-phosphate site; these read AG and NT.

This sequence belongs to the ThiG family. As to quaternary structure, homotetramer. Forms heterodimers with either ThiH or ThiS.

It localises to the cytoplasm. It carries out the reaction [ThiS sulfur-carrier protein]-C-terminal-Gly-aminoethanethioate + 2-iminoacetate + 1-deoxy-D-xylulose 5-phosphate = [ThiS sulfur-carrier protein]-C-terminal Gly-Gly + 2-[(2R,5Z)-2-carboxy-4-methylthiazol-5(2H)-ylidene]ethyl phosphate + 2 H2O + H(+). The protein operates within cofactor biosynthesis; thiamine diphosphate biosynthesis. Its function is as follows. Catalyzes the rearrangement of 1-deoxy-D-xylulose 5-phosphate (DXP) to produce the thiazole phosphate moiety of thiamine. Sulfur is provided by the thiocarboxylate moiety of the carrier protein ThiS. In vitro, sulfur can be provided by H(2)S. The protein is Thiazole synthase of Aquifex aeolicus (strain VF5).